A 406-amino-acid chain; its full sequence is MARAFLFVLDSFGIGNAPDAEAFGDLGADTLGHIAEFCAAGAADRAGLREGPLHLPNMSALGLMHAARLATGRLPAGMALPERVYGIYGAASEVSRGKDTPSGHWEIAGTPVTFDWGYFPAEGDAFPPELVEAICREGDVPGILGNCHASGTDIIARHGEEHMRSGKPICYTSSDSVFQIAAHEQTFGLERLLNLCEVVRRLVDDYNIGRVIARPFVGSDPGSFTRTGNRRDYSVLPPEPTVLDRLQEAGRTVHAIGKIGDIFAHQGVTRLTKANGNMALFDASLEAIEEAEDGALVFTNFVDFDMLYGHRRDVSGYAAALEAFDARLPDLDRRLKPGDMVILTADHGCDPTWRGTDHTRERVPVLMFGPTLRSRSFGIADSFAHIGETVARHLGIGVGPHGRSLI.

Positions 10, 305, 310, 346, 347, and 358 each coordinate Mn(2+).

The protein belongs to the phosphopentomutase family. Mn(2+) serves as cofactor.

The protein localises to the cytoplasm. It catalyses the reaction 2-deoxy-alpha-D-ribose 1-phosphate = 2-deoxy-D-ribose 5-phosphate. It carries out the reaction alpha-D-ribose 1-phosphate = D-ribose 5-phosphate. Its pathway is carbohydrate degradation; 2-deoxy-D-ribose 1-phosphate degradation; D-glyceraldehyde 3-phosphate and acetaldehyde from 2-deoxy-alpha-D-ribose 1-phosphate: step 1/2. Functionally, isomerase that catalyzes the conversion of deoxy-ribose 1-phosphate (dRib-1-P) and ribose 1-phosphate (Rib-1-P) to deoxy-ribose 5-phosphate (dRib-5-P) and ribose 5-phosphate (Rib-5-P), respectively. In Rhizobium meliloti (strain 1021) (Ensifer meliloti), this protein is Phosphopentomutase.